Consider the following 94-residue polypeptide: MGRSLKKGPYCDPKLLKKIEKLNQNNEKKVIKTWSRRSTILPQMVGHTIAVYDGRKHVPVYITEEMVGHKLGEFAPTRTFKGHGHHTERSTALK.

This sequence belongs to the universal ribosomal protein uS19 family.

Protein S19 forms a complex with S13 that binds strongly to the 16S ribosomal RNA. This chain is Small ribosomal subunit protein uS19, found in Caldicellulosiruptor saccharolyticus (strain ATCC 43494 / DSM 8903 / Tp8T 6331).